The primary structure comprises 358 residues: Short chain dehydrogenase sor7 (358 aa).

The interval Met-1–Gly-22 is disordered. Residues Leu-34, Asp-88, Asn-115, Tyr-206, Lys-210, Val-238, and Thr-240 each coordinate NADP(+). Catalysis depends on Tyr-206, which acts as the Proton donor. The Lowers pKa of active site Tyr role is filled by Lys-210.

This sequence belongs to the short-chain dehydrogenases/reductases (SDR) family.

Its pathway is secondary metabolite biosynthesis. Its function is as follows. Short chain dehydrogenase; part of the SOR gene cluster that mediates the biosynthesis of sorbicillinoids, a diverse group of yellow secondary metabolites that restrict growth of competing pathogenic fungi but not of bacteria. Sorbicillinoids biosynthesis requires the action of two PKSs. The SOR cluster is required for the production of trichodimerol and dihydrotrichotetronin, with sor2 being sufficient for production of trichodimerol, but not dihydrotrichotetronin in the light. Sor1 iteratively combines three acetyl units and the growing chain is modified by the ketoacyl reductase subunit, and optional by the enoyl reductase subunit in the second cycle. The polyketide is then handed over to the PKS sor2, which adds three more acetyl units, and two methyl groups. Sor2 releases an aldehyde, which undergoes spontaneous cyclization resulting in the formation of sorbicillin or 2',3'-dihydrosorbicillin. The monooxygenase sor5 oxidizes sorbicillin and 2',3'-dihydrosorbicillin to 2',3'-dihydrosorbicillinol and sorbicillinol, respectively. The oxidoreductase sor8 further converts sorbicillinol into oxosorbicillinol. Sorbicillinol is the building block for the other sorbicillinoids such as disorbicillinol, bisvertinolon, dihydrobisvertinolone, and dihydrotrichotetronine. In Hypocrea jecorina (strain QM6a) (Trichoderma reesei), this protein is Short chain dehydrogenase sor7.